The following is a 120-amino-acid chain: Holo-[acyl-carrier-protein] synthase (120 aa).

Residues aspartate 8 and glutamate 58 each contribute to the Mg(2+) site.

It belongs to the P-Pant transferase superfamily. AcpS family. Mg(2+) serves as cofactor.

It localises to the cytoplasm. It catalyses the reaction apo-[ACP] + CoA = holo-[ACP] + adenosine 3',5'-bisphosphate + H(+). Its function is as follows. Transfers the 4'-phosphopantetheine moiety from coenzyme A to a Ser of acyl-carrier-protein. This is Holo-[acyl-carrier-protein] synthase from Limosilactobacillus reuteri (strain DSM 20016) (Lactobacillus reuteri).